A 424-amino-acid polypeptide reads, in one-letter code: Dihydroorotase-like protein (424 aa).

It belongs to the metallo-dependent hydrolases superfamily. DHOase family. PyrC' subfamily. In terms of assembly, heterododecamer of 6 active PyrB subunits and 6 non-catalytic PyrC' subunits.

Non-functional DHOase. The polypeptide is Dihydroorotase-like protein (Pseudomonas putida (Arthrobacter siderocapsulatus)).